The sequence spans 503 residues: Arginyl-tRNA--protein transferase 1 (503 aa).

Belongs to the R-transferase family.

The protein resides in the cytoplasm. It catalyses the reaction an N-terminal L-alpha-aminoacyl-[protein] + L-arginyl-tRNA(Arg) = an N-terminal L-arginyl-L-aminoacyl-[protein] + tRNA(Arg) + H(+). In terms of biological role, involved in the post-translational conjugation of arginine to the N-terminal aspartate or glutamate of a protein. This arginylation is required for degradation of the protein via the ubiquitin pathway. Does not arginylate cysteine residues. In Saccharomyces cerevisiae (strain ATCC 204508 / S288c) (Baker's yeast), this protein is Arginyl-tRNA--protein transferase 1 (ATE1).